Here is a 256-residue protein sequence, read N- to C-terminus: Putative transcription factor 001R (256 aa).

In terms of biological role, transcription activation. The sequence is that of Putative transcription factor 001R from Frog virus 3 (isolate Goorha) (FV-3).